We begin with the raw amino-acid sequence, 491 residues long: Cytochrome P450 2B2 (491 aa).

S128 carries the post-translational modification Phosphoserine; by PKA. C436 is a heme binding site.

The protein belongs to the cytochrome P450 family. The cofactor is heme. Post-translationally, phosphorylation is accompanied by a decrease in enzyme activity.

The protein resides in the endoplasmic reticulum membrane. The protein localises to the microsome membrane. The enzyme catalyses an organic molecule + reduced [NADPH--hemoprotein reductase] + O2 = an alcohol + oxidized [NADPH--hemoprotein reductase] + H2O + H(+). Functionally, cytochromes P450 are a group of heme-thiolate monooxygenases. In liver microsomes, this enzyme is involved in an NADPH-dependent electron transport pathway. It oxidizes a variety of structurally unrelated compounds, including steroids, fatty acids, and xenobiotics. This chain is Cytochrome P450 2B2 (Cyp2b2), found in Rattus norvegicus (Rat).